We begin with the raw amino-acid sequence, 237 residues long: Lectin alpha chain (237 aa).

Mn(2+)-binding residues include E8 and D10. Residues D10, Y12, N14, and D19 each coordinate Ca(2+). Residue Y12 participates in a carbohydrate binding. Residues D19, H24, and S34 each coordinate Mn(2+). L99–Y100 is an a carbohydrate binding site. Residue D208 participates in Ca(2+) binding. R228 serves as a coordination point for a carbohydrate.

It belongs to the leguminous lectin family. In terms of assembly, homotetramer. In terms of processing, the beta and gamma chains are produced by partial proteolytic processing of the lectin alpha chain by an asparaginyl endopeptidase. Mixture of 60% alpha lectin and 40% of its beta and gamma proteolytic fragments.

In terms of biological role, D-mannose/D-glucose-binding lectin. Has anti-inflammatory activity in rats. Induces histamine release in mast cells from rat. Induces lymphocyte proliferation and IFNG production. Shows toxicity against the aquatic snail B.glabrata at concentrations higher than 50 ug/ml. The protein is Lectin alpha chain of Dioclea grandiflora (Mucana).